The chain runs to 1603 residues: Protein TIC 214 (1603 aa).

6 helical membrane passes run Val11–Leu31, Leu58–Ile78, Leu86–Tyr106, Ile131–Leu151, Leu167–Ile187, and Phe213–Phe233.

Belongs to the TIC214 family. Part of the Tic complex.

It is found in the plastid. Its subcellular location is the chloroplast inner membrane. Involved in protein precursor import into chloroplasts. May be part of an intermediate translocation complex acting as a protein-conducting channel at the inner envelope. This chain is Protein TIC 214, found in Physcomitrium patens (Spreading-leaved earth moss).